A 312-amino-acid chain; its full sequence is sn-1-specific diacylglycerol lipase ABHD11 (312 aa).

The N-terminal 14 residues, 1–14 (MITFKSFHCSRGWH), are a transit peptide targeting the mitochondrion. Residues 62-297 (PPLVLLHGLF…GAGHWVHADK (236 aa)) enclose the AB hydrolase-1 domain. Residues Ser136, Glu232, and His291 each act as charge relay system in the active site.

This sequence belongs to the AB hydrolase superfamily. Post-translationally, phosphorylated.

It localises to the mitochondrion. Its subcellular location is the mitochondrion matrix. It carries out the reaction 1-octadecanoyl-2-(5Z,8Z,11Z,14Z-eicosatetraenoyl)-sn-glycerol + H2O = 2-(5Z,8Z,11Z,14Z-eicosatetraenoyl)-glycerol + octadecanoate + H(+). It catalyses the reaction a 1,2-diacyl-sn-glycerol + H2O = a 2-acylglycerol + a fatty acid + H(+). The enzyme catalyses a 1,3-diacyl-sn-glycerol + H2O = a 1-acyl-sn-glycerol + a fatty acid + H(+). The catalysed reaction is 1-octadecanoyl-2-(9Z-octadecenoyl)-sn-glycerol + H2O = 2-(9Z-octadecenoyl)-glycerol + octadecanoate + H(+). It carries out the reaction 1-octadecanoyl-2-(4Z,7Z,10Z,13Z,16Z,19Z-docosahexaenoyl)-sn-glycerol + H2O = 2-(4Z,7Z,10Z,13Z,16Z,19Z-docosahexaenoyl)-glycerol + octadecanoate + H(+). It catalyses the reaction 1,2-didecanoylglycerol + H2O = decanoylglycerol + decanoate + H(+). In terms of biological role, catalyzes the hydrolysis of diacylglycerol in vitro and may function as a key regulator in lipid metabolism, namely by regulating the intracellular levels of diacylglycerol. 1,2-diacyl-sn-glycerols are the preferred substrate over 1,3-diacyl-sn-glycerols. The enzyme hydrolyzes stearate in preference to palmitate from the sn-1 position of 1,2-diacyl-sn-glycerols. In Xenopus laevis (African clawed frog), this protein is sn-1-specific diacylglycerol lipase ABHD11.